A 1035-amino-acid polypeptide reads, in one-letter code: Cell-division control histidine kinase PdhS (1035 aa).

The interval 1–613 (MSGSYPFIDI…HADGSEEPVD (613 aa)) is important for polar localization. The segment at 500–533 (QGLANTRAESETPVSETSSIEPVEPTPPVKTRSE) is disordered. Residues 614–1035 (AHLNAIAWRG…VFPPTRVLAD (422 aa)) form an interaction with DivK region. The PAS domain maps to 659–730 (HVEELKTILD…YLHGLSGNGV (72 aa)). In terms of domain architecture, Histidine kinase spans 802–1031 (RISHEIRTPL…VVEIVFPPTR (230 aa)). Phosphohistidine; by autocatalysis is present on H805.

Interacts with DivK.

The protein resides in the cytoplasm. It carries out the reaction ATP + protein L-histidine = ADP + protein N-phospho-L-histidine.. Its function is as follows. Functions as a polar differentiation marker. Essential protein that, by localizing in the old pole of dividing cells, controls cell division and maturation, probably through control of DivK phosphorylation status and cellular distribution, which in turn regulates CtrA, a transcriptional regulator of the minB operon. The asymmetrical localization of this protein is probably required for cells to enter a new division cycle. This is Cell-division control histidine kinase PdhS (pdhS) from Brucella suis biovar 1 (strain 1330).